We begin with the raw amino-acid sequence, 543 residues long: Chaperonin GroEL (543 aa).

Residues 29–32, 86–90, Gly-413, 476–478, and Asp-492 contribute to the ATP site; these read TLGP, DGTTT, and NAA.

The protein belongs to the chaperonin (HSP60) family. In terms of assembly, forms a cylinder of 14 subunits composed of two heptameric rings stacked back-to-back. Interacts with the co-chaperonin GroES.

It is found in the cytoplasm. It carries out the reaction ATP + H2O + a folded polypeptide = ADP + phosphate + an unfolded polypeptide.. Functionally, together with its co-chaperonin GroES, plays an essential role in assisting protein folding. The GroEL-GroES system forms a nano-cage that allows encapsulation of the non-native substrate proteins and provides a physical environment optimized to promote and accelerate protein folding. The sequence is that of Chaperonin GroEL from Brevibacillus choshinensis.